Reading from the N-terminus, the 224-residue chain is Pyridoxal 5'-phosphate synthase subunit SNO1 (224 aa).

Residue 67–69 participates in L-glutamine binding; that stretch reads GES. The active-site Nucleophile is C100. Residues R129 and 160–161 contribute to the L-glutamine site; that span reads IR. Active-site charge relay system residues include H203 and E205.

Belongs to the glutaminase PdxT/SNO family.

The catalysed reaction is aldehydo-D-ribose 5-phosphate + D-glyceraldehyde 3-phosphate + L-glutamine = pyridoxal 5'-phosphate + L-glutamate + phosphate + 3 H2O + H(+). The enzyme catalyses L-glutamine + H2O = L-glutamate + NH4(+). Its pathway is cofactor biosynthesis; pyridoxal 5'-phosphate biosynthesis. In terms of biological role, catalyzes the hydrolysis of glutamine to glutamate and ammonia as part of the biosynthesis of pyridoxal 5'-phosphate. The resulting ammonia molecule is channeled to the active site of a SNZ isoform. The protein is Pyridoxal 5'-phosphate synthase subunit SNO1 (SNO1) of Saccharomyces cerevisiae (strain ATCC 204508 / S288c) (Baker's yeast).